A 399-amino-acid chain; its full sequence is Mannan endo-1,4-beta-mannosidase 4 (399 aa).

A signal peptide spans 1–26 (MNNSIILIFVAILIIFPNEFSKPTRA). Trp88 and Asn203 together coordinate substrate. Catalysis depends on Glu204, which acts as the Proton donor. Residue Tyr279 participates in substrate binding. Glu318 functions as the Nucleophile in the catalytic mechanism. Cys347 and Cys354 are joined by a disulfide. Residue Trp360 coordinates substrate.

This sequence belongs to the glycosyl hydrolase 5 (cellulase A) family. In terms of tissue distribution, expressed in flowers and fruit pericarp.

The protein resides in the secreted. It catalyses the reaction Random hydrolysis of (1-&gt;4)-beta-D-mannosidic linkages in mannans, galactomannans and glucomannans.. Its function is as follows. Possesses endo-beta-mannanase and mannan transglycosylase activities. May be involved in cell wall degradation during fruit ripening. This is Mannan endo-1,4-beta-mannosidase 4 (MAN4) from Solanum lycopersicum (Tomato).